The sequence spans 1323 residues: ABC transporter gloK (1323 aa).

Transmembrane regions (helical) follow at residues 6-26, 102-122, 138-158, 217-237, 240-260, 325-345, and 359-379; these read AIAS…TLEA, PHAL…AGIL, VAYG…VMST, IWAS…RLGV, VAAV…VFGF, LLVG…VFAF, and PLLA…GQAV. The 239-residue stretch at 142-380 folds into the ABC transmembrane type-1 1 domain; it reads LIAAYAIVYI…IFSLLGQAVS (239 aa). Positions 471-697 constitute an ABC transporter 1 domain; it reads IRDCSACWSK…SSYLESLGTR (227 aa). 503 to 510 contributes to the ATP binding site; sequence GPIGSGKS. The next 7 helical transmembrane spans lie at 748–768, 795–815, 821–841, 859–879, 891–910, 976–996, and 1006–1026; these read GWVT…GLVF, YALW…WLMI, AAIQ…LVYF, LIDM…LSCI, YVAA…QLFY, LNLT…SIAL, and IGVA…LVYT. The 280-residue stretch at 752-1031 folds into the ABC transmembrane type-1 2 domain; sequence WWVFVLLCSG…TLVYTWTSLE (280 aa). The ABC transporter 2 domain occupies 1069-1300; sequence IRFQSVSAAY…PSFFASLLKA (232 aa). Residue 1103 to 1110 participates in ATP binding; it reads GRTGSGKS.

It belongs to the ABC transporter superfamily. ABCC family. Conjugate transporter (TC 3.A.1.208) subfamily.

The protein resides in the cell membrane. Its function is as follows. 3-isopropylmalate dehydratase large subunit; part of the gene cluster that mediates the biosynthesis of pneumocandins, lipohexapeptides of the echinocandin family that prevent fungal cell wall formation by non-competitive inhibition of beta-1,3-glucan synthase. Possibly secretes antifungal pneumocandins, thus avoiding of intracellular accumulation and ameliorating the toxicity to the producing cells. In Glarea lozoyensis (strain ATCC 20868 / MF5171), this protein is ABC transporter gloK.